We begin with the raw amino-acid sequence, 680 residues long: NADPH--cytochrome P450 reductase (680 aa).

The Lumenal portion of the chain corresponds to 1–5 (MALDK). Residues 6-23 (LDLYVIITLVVAIAAYFA) form a helical membrane-spanning segment. The Cytoplasmic portion of the chain corresponds to 24 to 680 (KNQFLDQQQD…VQNRYQEDVW (657 aa)). The 145-residue stretch at 60–204 (TLLLFGSQTG…DFLAWKDNVF (145 aa)) folds into the Flavodoxin-like domain. FMN-binding positions include 66–71 (SQTGTA), 117–120 (ATYG), 152–161 (LGNSTYEFFN), and Asp187. Positions 264–509 (THPFLARIVK…NGPRGKFSKF (246 aa)) constitute an FAD-binding FR-type domain. Arg283 serves as a coordination point for NADP(+). Residues 439 to 442 (RYYS), 457 to 459 (TAV), and 473 to 476 (GVVT) contribute to the FAD site. Residues Thr537, 599–600 (SR), 606–610 (KVYVQ), and Asp642 each bind NADP(+). Residue Trp680 coordinates FAD.

It belongs to the NADPH--cytochrome P450 reductase family. This sequence in the N-terminal section; belongs to the flavodoxin family. In the C-terminal section; belongs to the flavoprotein pyridine nucleotide cytochrome reductase family. The cofactor is FAD. FMN is required as a cofactor.

The protein localises to the endoplasmic reticulum membrane. Its subcellular location is the mitochondrion outer membrane. The protein resides in the cell membrane. The enzyme catalyses 2 oxidized [cytochrome P450] + NADPH = 2 reduced [cytochrome P450] + NADP(+) + H(+). In terms of biological role, this enzyme is required for electron transfer from NADP to cytochrome P450 in microsomes. It can also provide electron transfer to heme oxygenase and cytochrome B5. Involved in ergosterol biosynthesis. This Candida tropicalis (Yeast) protein is NADPH--cytochrome P450 reductase.